The sequence spans 141 residues: Large ribosomal subunit protein uL11 (141 aa).

It belongs to the universal ribosomal protein uL11 family. Part of the ribosomal stalk of the 50S ribosomal subunit. Interacts with L10 and the large rRNA to form the base of the stalk. L10 forms an elongated spine to which L12 dimers bind in a sequential fashion forming a multimeric L10(L12)X complex. In terms of processing, one or more lysine residues are methylated.

Functionally, forms part of the ribosomal stalk which helps the ribosome interact with GTP-bound translation factors. This is Large ribosomal subunit protein uL11 from Fusobacterium nucleatum subsp. nucleatum (strain ATCC 25586 / DSM 15643 / BCRC 10681 / CIP 101130 / JCM 8532 / KCTC 2640 / LMG 13131 / VPI 4355).